Consider the following 263-residue polypeptide: Probable ABC transporter permease protein slr1045 (263 aa).

Transmembrane regions (helical) follow at residues 12 to 32 (LWFQRLVAAFFLTGQVFLHIL), 52 to 72 (SMAIALITAGFVGMVFTIQVA), 97 to 117 (APVLTAVVIAGRVGSAFAAEI), 140 to 162 (LVVPRVIACGLMLPILTGLSLFV), 167 to 186 (GLVISSSLYAINPTIFLNSV), 192 to 212 (LWDVFACLFKSLVFGVIIAII), and 234 to 254 (AVVTSLLAIFISNFFLSWLMF).

The protein belongs to the MlaE permease family.

The protein localises to the cell membrane. Its function is as follows. Could be part of an ABC transporter complex. This chain is Probable ABC transporter permease protein slr1045, found in Synechocystis sp. (strain ATCC 27184 / PCC 6803 / Kazusa).